The chain runs to 258 residues: Transcription initiation factor TFIID subunit 9B (258 aa).

Met-1 carries the post-translational modification N-acetylmethionine. A Phosphoserine modification is found at Ser-147. A phosphothreonine mark is found at Thr-159 and Thr-174. Ser-177 is modified (phosphoserine). The span at 227–236 (SSQSTATDSN) shows a compositional bias: polar residues. Residues 227–258 (SSQSTATDSNPLKRKHDDDDDDDDDDDDNDTM) form a disordered region. Residues 244–258 (DDDDDDDDDDDNDTM) are compositionally biased toward acidic residues.

The protein belongs to the TAF9 family. In terms of assembly, binds TAF5 and TAF6. Component of TFIID and the TATA-binding protein-free TAF complex (TFTC). TFIID is composed of TATA binding protein (TBP) and a number of TBP-associated factors (TAFs). Binds N-terminal domain of p53/TP53 which is essential for transcription.

The protein resides in the nucleus. Functionally, essential for cell viability. TAF9 and TAF9L are involved in transcriptional activation as well as repression of distinct but overlapping sets of genes. May have a role in gene regulation associated with apoptosis. TAFs are components of the transcription factor IID (TFIID) complex, the TBP-free TAFII complex (TFTC), the PCAF histone acetylase complex and the STAGA transcription coactivator-HAT complex. TFIID or TFTC are essential for the regulation of RNA polymerase II-mediated transcription. This Rattus norvegicus (Rat) protein is Transcription initiation factor TFIID subunit 9B (Taf9b).